A 276-amino-acid polypeptide reads, in one-letter code: A-factor receptor protein (276 aa).

The HTH tetR-type domain occupies 8-68; the sequence is VQTWRSIVDA…AIMDEQTSTV (61 aa). The H-T-H motif DNA-binding region spans 31-50; the sequence is AISEILRRAKVTKGALYFHF. Residues 207–220 show a composition bias toward basic and acidic residues; sequence EKAEREEQEARIAA. Residues 207–276 are disordered; sequence EKAEREEQEA…AGVAAGGVVA (70 aa). Positions 221–235 are enriched in low complexity; the sequence is EAKGAGSDAATDSGS. Residues 236 to 257 are compositionally biased toward gly residues; sequence RSGGSGLRGGGSGRGPRAGGAG.

Homodimer or multimer. Binds to both DNA and A-factor as a homodimer.

Its subcellular location is the cytoplasm. Functionally, represses adpA expression by binding to the promoter region in the absence of A-factor, causing repression of streptomycin production and of sporulation. The sequence is that of A-factor receptor protein (arpA) from Streptomyces griseus.